Here is a 479-residue protein sequence, read N- to C-terminus: GMP reductase (479 aa).

2 CBS domains span residues 96 to 153 and 154 to 212; these read VLDT…VRDI and AVTD…ATDS. NADP(+) contacts are provided by residues 246-248 and 296-298; these read DTA and GVG. Residue Cys-303 is the Thioimidate intermediate of the active site.

The protein belongs to the IMPDH/GMPR family. GuaB1 subfamily. Requires a monovalent cation as cofactor.

It catalyses the reaction IMP + NH4(+) + NADP(+) = GMP + NADPH + 2 H(+). It participates in purine metabolism; IMP biosynthesis via salvage pathway. Functionally, involved in the purine-salvage pathway. Catalyzes the NADPH-dependent conversion of GMP to IMP. This Mycobacterium bovis (strain ATCC BAA-935 / AF2122/97) protein is GMP reductase.